Consider the following 514-residue polypeptide: Probable cytochrome P450 6w1 (514 aa).

Position 450 (Cys-450) interacts with heme.

This sequence belongs to the cytochrome P450 family. The cofactor is heme.

The protein localises to the endoplasmic reticulum membrane. It is found in the microsome membrane. Functionally, may be involved in the metabolism of insect hormones and in the breakdown of synthetic insecticides. The polypeptide is Probable cytochrome P450 6w1 (Cyp6w1) (Drosophila melanogaster (Fruit fly)).